A 138-amino-acid chain; its full sequence is MVLYFSPVLTFFLANFFNSKSTTTENLQVFLVENQHRDSKRKINPTFSKKGIEVRQQNENLWSKIVALRFDYSVWGIIQLVLMMGLFFYINSVALIEDLPIDEEFNSVEEFYTAATSAYNQNAYTVGLPVHLCAYASI.

The first 24 residues, 1 to 24 (MVLYFSPVLTFFLANFFNSKSTTT), serve as a signal peptide directing secretion. At 25–75 (ENLQVFLVENQHRDSKRKINPTFSKKGIEVRQQNENLWSKIVALRFDYSVW) the chain is on the extracellular side. The helical transmembrane segment at 76–96 (GIIQLVLMMGLFFYINSVALI) threads the bilayer. The Cytoplasmic portion of the chain corresponds to 97-138 (EDLPIDEEFNSVEEFYTAATSAYNQNAYTVGLPVHLCAYASI).

Belongs to the RNase K family.

The protein localises to the membrane. Its function is as follows. Endoribonuclease. The sequence is that of Ribonuclease kappa-A from Ceratitis capitata (Mediterranean fruit fly).